The primary structure comprises 514 residues: Putative fumarate hydratase class I (514 aa).

Residues Cys-62, Cys-187, and Cys-274 each contribute to the [4Fe-4S] cluster site.

Belongs to the class-I fumarase family. In terms of assembly, homodimer. It depends on [4Fe-4S] cluster as a cofactor.

It catalyses the reaction (S)-malate = fumarate + H2O. It functions in the pathway carbohydrate metabolism; tricarboxylic acid cycle; (S)-malate from fumarate: step 1/1. Functionally, catalyzes the reversible hydration of fumarate to (S)-malate. The polypeptide is Putative fumarate hydratase class I (fumA) (Geobacillus stearothermophilus (Bacillus stearothermophilus)).